The primary structure comprises 254 residues: 4-hydroxy-tetrahydrodipicolinate reductase (254 aa).

7-12 (GASGRI) is an NAD(+) binding site. Arg35 serves as a coordination point for NADP(+). NAD(+)-binding positions include 91–93 (GTT) and 115–118 (AHNM). His147 functions as the Proton donor/acceptor in the catalytic mechanism. His148 provides a ligand contact to (S)-2,3,4,5-tetrahydrodipicolinate. The active-site Proton donor is Lys151. 157-158 (GT) contacts (S)-2,3,4,5-tetrahydrodipicolinate.

It belongs to the DapB family.

The protein resides in the cytoplasm. It catalyses the reaction (S)-2,3,4,5-tetrahydrodipicolinate + NAD(+) + H2O = (2S,4S)-4-hydroxy-2,3,4,5-tetrahydrodipicolinate + NADH + H(+). The catalysed reaction is (S)-2,3,4,5-tetrahydrodipicolinate + NADP(+) + H2O = (2S,4S)-4-hydroxy-2,3,4,5-tetrahydrodipicolinate + NADPH + H(+). The protein operates within amino-acid biosynthesis; L-lysine biosynthesis via DAP pathway; (S)-tetrahydrodipicolinate from L-aspartate: step 4/4. Functionally, catalyzes the conversion of 4-hydroxy-tetrahydrodipicolinate (HTPA) to tetrahydrodipicolinate. The protein is 4-hydroxy-tetrahydrodipicolinate reductase of Helicobacter pylori (strain ATCC 700392 / 26695) (Campylobacter pylori).